Consider the following 87-residue polypeptide: Small ribosomal subunit protein bS20 (87 aa).

This sequence belongs to the bacterial ribosomal protein bS20 family.

Binds directly to 16S ribosomal RNA. The sequence is that of Small ribosomal subunit protein bS20 from Clostridium botulinum (strain Eklund 17B / Type B).